The sequence spans 401 residues: TNTPEQDRYLQAEKYIEFYVIVDNRMYRYYNYDKPAIKIRVYEMINAVNTKFRPLKIHIALIGLEIWSNEDKFEVKPAASVTLKSFREWRQTVLLPRKRNDNAQLLTGINLNGTAVGIAYPGSLCTQRSVFVVQDYNRRMSLVASTMTHELGHNLGIHHDEASCICIPGPCIMLKKRTAPAFQFSSCSIRDYQEYLLRDRPQCILNKPLSTDIVSPAICGNYFVEEGEECDCGSPAACQSACCDAATCKFNGAGAECRAAKHDCDLPELCTGQSAECPTDSLQRNGHPCQNNQGYCYNGKCPTLTNQCIALLGPHFTVSPKGCFDLNMRGDDGSFCRMEDGTKIPCAAKDVKCGRLYCTEKNTMSCLIPPNPDGIMAEPGTKCGDGMVCSKGQCVDVQTAY.

Positions 14 to 208 constitute a Peptidase M12B domain; that stretch reads KYIEFYVIVD…DRPQCILNKP (195 aa). Ca(2+)-binding residues include Glu17 and Asp101. Asn112 is a glycosylation site (N-linked (GlcNAc...) asparagine). Disulfide bonds link Cys125–Cys203, Cys164–Cys187, and Cys166–Cys171. Position 149 (His149) interacts with Zn(2+). Glu150 is a catalytic residue. Zn(2+) contacts are provided by His153 and His159. Residues Cys203, Asn206, Ile218, Asn221, Phe223, Glu225, Glu228, and Asp231 each contribute to the Ca(2+) site. The Disintegrin domain maps to 216–285; that stretch reads PAICGNYFVE…ECPTDSLQRN (70 aa). Disulfide bonds link Cys219-Cys248, Cys230-Cys243, Cys232-Cys238, Cys257-Cys277, Cys264-Cys296, Cys289-Cys301, Cys308-Cys358, Cys323-Cys366, Cys336-Cys346, Cys353-Cys389, and Cys383-Cys394. The short motif at 263–265 is the D/ECD-tripeptide element; sequence DCD. Residues Asp265, Leu266, Glu268, and Asp280 each coordinate Ca(2+).

This sequence belongs to the venom metalloproteinase (M12B) family. P-III subfamily. P-IIIa sub-subfamily. As to quaternary structure, monomer. The cofactor is Zn(2+). Expressed by the venom gland.

The protein localises to the secreted. Snake venom zinc protease that inhibits hemostasis by binding and cleaving the vWF in humans. Also has and inhibitory effect on the collagen-induced platelet aggregation. In Naja kaouthia (Monocled cobra), this protein is Hemorrhagic metalloproteinase-disintegrin-like kaouthiagin.